The sequence spans 369 residues: MAKFELYAEVDVSISGHQYPIIICRNGLIDPELINRFITSKQVLIVTNRTVAPLYLGHLQSVLPSKQCDVVILEDGEEHKNQRSLFTIYDSLIQNKHHRDTSIIALGGGVIGDMAGFAASTYQRGVRFIQLPTTLLAQVDASVGGKTAINHPAGKNMIGSFYQPQAVIIDLNTLKTLPEREFRAGIAEMIKYALLVGGSFFERIQEALQQGLTVHSPELPLLIAECCQVKAKIVEQDERESGLRALLNLGHTFAHALETYTDYKKWLHGEAVAIGLYCAAVLSEKKGLLDKPIVDQVEKMLIHAGLPHKIPNSIDLIQLRELMSLDKKIKNNCLRFVMIKKPGACYIDDSVTEDCLHNALINVVEGERK.

NAD(+) contacts are provided by residues 75–80 (DGEEHK), 109–113 (GVIGD), 133–134 (TT), lysine 146, lysine 155, and 173–176 (TLKT). Zn(2+) is bound by residues glutamate 188, histidine 251, and histidine 268.

It belongs to the sugar phosphate cyclases superfamily. Dehydroquinate synthase family. The cofactor is Co(2+). Zn(2+) is required as a cofactor. It depends on NAD(+) as a cofactor.

Its subcellular location is the cytoplasm. The catalysed reaction is 7-phospho-2-dehydro-3-deoxy-D-arabino-heptonate = 3-dehydroquinate + phosphate. Its pathway is metabolic intermediate biosynthesis; chorismate biosynthesis; chorismate from D-erythrose 4-phosphate and phosphoenolpyruvate: step 2/7. Its function is as follows. Catalyzes the conversion of 3-deoxy-D-arabino-heptulosonate 7-phosphate (DAHP) to dehydroquinate (DHQ). This chain is 3-dehydroquinate synthase, found in Legionella pneumophila subsp. pneumophila (strain Philadelphia 1 / ATCC 33152 / DSM 7513).